The following is a 156-amino-acid chain: Small ribosomal subunit protein uS10m (156 aa).

This sequence belongs to the universal ribosomal protein uS10 family.

It localises to the mitochondrion. Its function is as follows. Ribosomal protein required for normal mitochondrial function and normal larval development. Thought to have a role in insulin/IGF signaling. The protein is Small ribosomal subunit protein uS10m (mrps-10) of Caenorhabditis elegans.